Reading from the N-terminus, the 172-residue chain is uncharacterized protein (172 aa).

A helical transmembrane segment spans residues 109–129 (MLLLYLYYNLLLLTASTPLTF).

It localises to the membrane. This is an uncharacterized protein from Saccharomyces cerevisiae (strain ATCC 204508 / S288c) (Baker's yeast).